Reading from the N-terminus, the 535-residue chain is Alpha-1,3-mannosyl-glycoprotein 4-beta-N-acetylglucosaminyltransferase A (535 aa).

The Cytoplasmic segment spans residues 1–4 (MRLR). The helical; Signal-anchor for type II membrane protein transmembrane segment at 5–27 (NGTVATALAFITSFLTLSWYTTW) threads the bilayer. A coiled-coil region spans residues 28-63 (QNGKEKLIAYQREFLALKERLRIAEHRISQRSSELN). Over 28–535 (QNGKEKLIAY…NEIHIKKATK (508 aa)) the chain is Lumenal. N-linked (GlcNAc...) asparagine glycans are attached at residues N77 and N458. Phosphoserine is present on S474.

The protein belongs to the glycosyltransferase 54 family. Requires a divalent metal cation as cofactor. In terms of processing, N-glycosylated.

The protein localises to the golgi apparatus membrane. It is found in the secreted. The enzyme catalyses N(4)-{beta-D-GlcNAc-(1-&gt;2)-alpha-D-Man-(1-&gt;3)-[beta-D-GlcNAc-(1-&gt;2)-alpha-D-Man-(1-&gt;6)]-beta-D-Man-(1-&gt;4)-beta-D-GlcNAc-(1-&gt;4)-beta-D-GlcNAc}-L-asparaginyl-[protein] + UDP-N-acetyl-alpha-D-glucosamine = N(4)-{beta-D-GlcNAc-(1-&gt;2)-[beta-D-GlcNAc-(1-&gt;4)]-alpha-D-Man-(1-&gt;3)-[beta-D-GlcNAc-(1-&gt;2)-alpha-D-Man-(1-&gt;6)]-beta-D-Man-(1-&gt;4)-beta-D-GlcNAc-(1-&gt;4)-beta-D-GlcNAc}-L-asparaginyl-[protein] + UDP + H(+). The catalysed reaction is an N(4)-{beta-D-GlcNAc-(1-&gt;2)-alpha-D-Man-(1-&gt;3)-[alpha-D-Man-(1-&gt;6)]-beta-D-Man-(1-&gt;4)-beta-D-GlcNAc-(1-&gt;4)-beta-D-GlcNAc}-L-asparaginyl-[protein] + UDP-N-acetyl-alpha-D-glucosamine = an N(4)-{beta-D-GlcNAc-(1-&gt;2)-[beta-D-GlcNAc-(1-&gt;4)]-alpha-D-Man-(1-&gt;3)-[alpha-D-Man-(1-&gt;6)]-beta-D-Man-(1-&gt;4)-beta-D-GlcNAc-(1-&gt;4)-beta-D-GlcNAc}-L-asparaginyl-[protein] + UDP + H(+). It catalyses the reaction an N(4)-{beta-D-GlcNAc-(1-&gt;2)-alpha-D-Man-(1-&gt;3)-[beta-D-GlcNAc-(1-&gt;2)-[beta-D-GlcNAc-(1-&gt;6)]-alpha-D-Man-(1-&gt;6)]-beta-D-Man-(1-&gt;4)-beta-D-GlcNAc-(1-&gt;4)-beta-D-GlcNAc}-L-asparaginyl-[protein] + UDP-N-acetyl-alpha-D-glucosamine = an N(4)-{beta-D-GlcNAc-(1-&gt;2)-[beta-D-GlcNAc-(1-&gt;4)]-alpha-D-Man-(1-&gt;3)-[beta-D-GlcNAc-(1-&gt;2)-[beta-D-GlcNAc-(1-&gt;6)]-alpha-D-Man-(1-&gt;6)]-beta-D-Man-(1-&gt;4)-beta-D-GlcNAc-(1-&gt;4)-beta-D-GlcNAc}-L-asparaginyl-[protein] + UDP + H(+). It carries out the reaction an N(4)-{beta-D-GlcNAc-(1-&gt;2)-alpha-D-Man-(1-&gt;3)-[beta-D-GlcNAc-(1-&gt;2)-alpha-D-Man-(1-&gt;6)]-beta-D-Man-(1-&gt;4)-beta-D-GlcNAc-(1-&gt;4)-[alpha-L-Fuc-(1-&gt;6)]-beta-D-GlcNAc}-L-asparaginyl-[protein] + UDP-N-acetyl-alpha-D-glucosamine = N(4)-{beta-D-GlcNAc-(1-&gt;2)-[beta-D-GlcNAc-(1-&gt;4)]-alpha-D-Man-(1-&gt;3)-[beta-D-GlcNAc-(1-&gt;2)-alpha-D-Man-(1-&gt;6)]-beta-D-Man-(1-&gt;4)-beta-D-GlcNAc-(1-&gt;4)-[alpha-L-Fuc-(1-&gt;6)]-beta-D-GlcNAc}-asparaginyl-[protein] + UDP + H(+). The enzyme catalyses an N(4)-{beta-D-GlcNAc-(1-&gt;2)-alpha-D-Man-(1-&gt;3)-[beta-D-Gal-(1-&gt;4)-beta-D-GlcNAc-(1-&gt;2)-alpha-D-Man-(1-&gt;6)]-beta-D-Man-(1-&gt;4)-beta-D-GlcNAc-(1-&gt;4)-beta-D-GlcNAc}-L-asparaginyl-[protein] + UDP-N-acetyl-alpha-D-glucosamine = an N(4)-{beta-D-GlcNAc-(1-&gt;2)-[beta-D-GlcNAc-(1-&gt;4)]-alpha-D-Man-(1-&gt;3)-[beta-D-Gal-(1-&gt;4)-beta-D-GlcNAc-(1-&gt;2)-alpha-D-Man-(1-&gt;6)]-beta-D-Man-(1-&gt;4)-beta-D-GlcNAc-(1-&gt;4)-beta-D-GlcNAc}-L-asparaginyl-[protein] + UDP + H(+). The catalysed reaction is N(4)-{beta-D-GlcNAc-(1-&gt;2)-alpha-D-Man-(1-&gt;3)-[alpha-D-Man-(1-&gt;3)-{alpha-D-Man-(1-&gt;6)}-alpha-D-Man-(1-&gt;6)]-beta-D-Man-(1-&gt;4)-beta-D-GlcNAc-(1-&gt;4)-beta-D-GlcNAc}-asparaginyl-[protein] + UDP-N-acetyl-alpha-D-glucosamine = N(4)-{beta-D-GlcNAc-(1-&gt;2)-[beta-D-GlcNAc-(1-&gt;4)]-alpha-D-Man-(1-&gt;3)-[alpha-D-Man-(1-&gt;3)-{alpha-D-Man-(1-&gt;6)}-alpha-D-Man-(1-&gt;6)]-beta-D-Man-(1-&gt;4)-beta-D-GlcNAc-(1-&gt;4)-beta-D-GlcNAc}-asparaginyl-[protein] + UDP + H(+). It catalyses the reaction N(4)-{beta-D-GlcNAc-(1-&gt;2)-alpha-D-Man-(1-&gt;3)-beta-D-Man-(1-&gt;4)-beta-D-GlcNAc-(1-&gt;4)-beta-D-GlcNAc}-asparaginyl-[protein] + UDP-N-acetyl-alpha-D-glucosamine = N(4)-{beta-D-GlcNAc-(1-&gt;2)-[beta-D-GlcNAc-(1-&gt;4)]-alpha-D-Man-(1-&gt;3)-beta-D-Man-(1-&gt;4)-beta-D-GlcNAc-(1-&gt;4)-beta-D-GlcNAc}-asparaginyl-[protein] + UDP + H(+). Its pathway is protein modification; protein glycosylation. With respect to regulation, inhibited by UDP. In terms of biological role, glycosyltransferase that catalyze the transfer of GlcNAc from UDP-GlcNAc to the GlcNAcbeta1-2Manalpha1-3 arm of the core structure of N-linked glycans through a beta1-4 linkage and participates in the production of tri- and tetra-antennary N-linked sugar chains. Involved in glucose transport by mediating SLC2A2/GLUT2 glycosylation, thereby controlling cell-surface expression of SLC2A2 in pancreatic beta cells. This chain is Alpha-1,3-mannosyl-glycoprotein 4-beta-N-acetylglucosaminyltransferase A, found in Macaca fascicularis (Crab-eating macaque).